The chain runs to 283 residues: Bifunctional protein FolD (283 aa).

NADP(+) contacts are provided by residues glycine 165–serine 167 and serine 190.

This sequence belongs to the tetrahydrofolate dehydrogenase/cyclohydrolase family. In terms of assembly, homodimer.

It carries out the reaction (6R)-5,10-methylene-5,6,7,8-tetrahydrofolate + NADP(+) = (6R)-5,10-methenyltetrahydrofolate + NADPH. The catalysed reaction is (6R)-5,10-methenyltetrahydrofolate + H2O = (6R)-10-formyltetrahydrofolate + H(+). It participates in one-carbon metabolism; tetrahydrofolate interconversion. Functionally, catalyzes the oxidation of 5,10-methylenetetrahydrofolate to 5,10-methenyltetrahydrofolate and then the hydrolysis of 5,10-methenyltetrahydrofolate to 10-formyltetrahydrofolate. The protein is Bifunctional protein FolD of Methylibium petroleiphilum (strain ATCC BAA-1232 / LMG 22953 / PM1).